Reading from the N-terminus, the 602-residue chain is Elongation factor 4 (602 aa).

The tr-type G domain occupies lysine 6 to arginine 188. GTP-binding positions include aspartate 18–threonine 23 and asparagine 135–aspartate 138.

It belongs to the TRAFAC class translation factor GTPase superfamily. Classic translation factor GTPase family. LepA subfamily.

It localises to the cell membrane. It carries out the reaction GTP + H2O = GDP + phosphate + H(+). Functionally, required for accurate and efficient protein synthesis under certain stress conditions. May act as a fidelity factor of the translation reaction, by catalyzing a one-codon backward translocation of tRNAs on improperly translocated ribosomes. Back-translocation proceeds from a post-translocation (POST) complex to a pre-translocation (PRE) complex, thus giving elongation factor G a second chance to translocate the tRNAs correctly. Binds to ribosomes in a GTP-dependent manner. In Moorella thermoacetica (strain ATCC 39073 / JCM 9320), this protein is Elongation factor 4.